Consider the following 256-residue polypeptide: Phosphonates import ATP-binding protein PhnC (256 aa).

An ABC transporter domain is found at 5 to 253 (LRITGLVKEY…MLKTIYGGES (249 aa)). ATP is bound at residue 38-45 (GPSGTGKS).

This sequence belongs to the ABC transporter superfamily. Phosphonates importer (TC 3.A.1.9.1) family. As to quaternary structure, the complex is composed of two ATP-binding proteins (PhnC), two transmembrane proteins (PhnE) and a solute-binding protein (PhnD).

Its subcellular location is the cell inner membrane. The enzyme catalyses phosphonate(out) + ATP + H2O = phosphonate(in) + ADP + phosphate + H(+). Functionally, part of the ABC transporter complex PhnCDE involved in phosphonates import. Responsible for energy coupling to the transport system. The sequence is that of Phosphonates import ATP-binding protein PhnC from Bordetella parapertussis (strain 12822 / ATCC BAA-587 / NCTC 13253).